Consider the following 422-residue polypeptide: Glucose-1-phosphate adenylyltransferase (422 aa).

Alpha-D-glucose 1-phosphate is bound by residues Tyr108, Gly173, 188–189 (EK), and Ser206.

Belongs to the bacterial/plant glucose-1-phosphate adenylyltransferase family. Homotetramer.

The enzyme catalyses alpha-D-glucose 1-phosphate + ATP + H(+) = ADP-alpha-D-glucose + diphosphate. The protein operates within glycan biosynthesis; glycogen biosynthesis. Involved in the biosynthesis of ADP-glucose, a building block required for the elongation reactions to produce glycogen. Catalyzes the reaction between ATP and alpha-D-glucose 1-phosphate (G1P) to produce pyrophosphate and ADP-Glc. The protein is Glucose-1-phosphate adenylyltransferase of Paraburkholderia phymatum (strain DSM 17167 / CIP 108236 / LMG 21445 / STM815) (Burkholderia phymatum).